Here is a 577-residue protein sequence, read N- to C-terminus: 2-succinyl-5-enolpyruvyl-6-hydroxy-3-cyclohexene-1-carboxylate synthase (577 aa).

It belongs to the TPP enzyme family. MenD subfamily. As to quaternary structure, homodimer. It depends on Mg(2+) as a cofactor. Requires Mn(2+) as cofactor. Thiamine diphosphate serves as cofactor.

The catalysed reaction is isochorismate + 2-oxoglutarate + H(+) = 5-enolpyruvoyl-6-hydroxy-2-succinyl-cyclohex-3-ene-1-carboxylate + CO2. The protein operates within quinol/quinone metabolism; 1,4-dihydroxy-2-naphthoate biosynthesis; 1,4-dihydroxy-2-naphthoate from chorismate: step 2/7. Its pathway is quinol/quinone metabolism; menaquinone biosynthesis. In terms of biological role, catalyzes the thiamine diphosphate-dependent decarboxylation of 2-oxoglutarate and the subsequent addition of the resulting succinic semialdehyde-thiamine pyrophosphate anion to isochorismate to yield 2-succinyl-5-enolpyruvyl-6-hydroxy-3-cyclohexene-1-carboxylate (SEPHCHC). The sequence is that of 2-succinyl-5-enolpyruvyl-6-hydroxy-3-cyclohexene-1-carboxylate synthase from Porphyromonas gingivalis (strain ATCC BAA-308 / W83).